A 2368-amino-acid chain; its full sequence is Serine/threonine-protein kinase MEC1 (2368 aa).

The FAT domain occupies L1399 to S1944. The PI3K/PI4K catalytic domain occupies F2049–T2352. The segment at V2055–K2061 is G-loop. The binding to the RPA complex stretch occupies residues S2140 to W2368. Residues G2221 to N2229 form a catalytic loop region. The tract at residues H2241 to T2265 is activation loop. The FATC domain occupies L2336–W2368.

The protein belongs to the PI3/PI4-kinase family. ATM subfamily. As to quaternary structure, interacts with LCD1, which is required for localization MEC1 to the RPA complex. Interacts directly with the RPA subunits RFA1 and RFA2.

Its subcellular location is the nucleus. It carries out the reaction L-seryl-[protein] + ATP = O-phospho-L-seryl-[protein] + ADP + H(+). The catalysed reaction is L-threonyl-[protein] + ATP = O-phospho-L-threonyl-[protein] + ADP + H(+). Its function is as follows. Serine/threonine protein kinase which activates checkpoint signaling upon genotoxic stresses such as ionizing radiation (IR), ultraviolet light (UV), or DNA replication stalling, thereby acting as a DNA damage sensor. Recognizes the substrate consensus sequence [ST]-Q. Recruited in complex with protein LCD1 by the single-strand-binding protein complex RPA to DNA lesions in order to initiate the DNA repair by homologous recombination, after the MRX-complex and TEL1 are displaced. Phosphorylates LCD1 and RPA2, a subunit of RPA, involved in DNA replication, repair and recombination. Phosphorylates RAD9, CHK1 and RAD53, which leads to the activation of the CHK1 and RAD53 kinases involved in DNA damage repair cascade. Phosphorylates histone H2A to form H2AS128ph (gamma-H2A) at sites of DNA damage, also involved in the regulation of DNA damage response mechanism. Also phosphorylates SLX4 and RTT107 which are proteins involved in genome stability. Required for cell growth and meiotic recombination. This Saccharomyces cerevisiae (strain ATCC 204508 / S288c) (Baker's yeast) protein is Serine/threonine-protein kinase MEC1 (MEC1).